The following is a 306-amino-acid chain: Ribonuclease H2 subunit B (306 aa).

The interval 232–285 (LPDLSSPTPEPPVKKRRVSDAPVEADEDYTKYNSDNKSRKSNSKMTAAQKSLAK) is disordered. Residues 259–269 (DYTKYNSDNKS) show a composition bias toward basic and acidic residues.

It belongs to the RNase H2 subunit B family. The RNase H2 complex is a heterotrimer composed of the catalytic subunit RNASEH2A and the non-catalytic subunits RNASEH2B and RNASEH2C.

It is found in the nucleus. Non catalytic subunit of RNase H2, an endonuclease that specifically degrades the RNA of RNA:DNA hybrids. Participates in DNA replication, possibly by mediating the removal of lagging-strand Okazaki fragment RNA primers during DNA replication. Mediates the excision of single ribonucleotides from DNA:RNA duplexes. In Xenopus laevis (African clawed frog), this protein is Ribonuclease H2 subunit B (rnaseh2b).